The sequence spans 202 residues: Glycerol-3-phosphate acyltransferase (202 aa).

The next 6 membrane-spanning stretches (helical) occupy residues 2 to 22, 51 to 71, 80 to 100, 116 to 136, 137 to 157, and 158 to 178; these read INLLFAVIAYLIGSVSFAVVV, KAAIFTLIGDALKGLAAVLLA, VDETGIALVALAVFLGHLFPL, ILFAIDPILGAGTLATWLIIA, FFFRYSSLAALISAIFAPFFY, and VLMNGVDIMAGAILVISVLLI.

Belongs to the PlsY family. In terms of assembly, probably interacts with PlsX.

It localises to the cell inner membrane. The catalysed reaction is an acyl phosphate + sn-glycerol 3-phosphate = a 1-acyl-sn-glycero-3-phosphate + phosphate. Its pathway is lipid metabolism; phospholipid metabolism. Its function is as follows. Catalyzes the transfer of an acyl group from acyl-phosphate (acyl-PO(4)) to glycerol-3-phosphate (G3P) to form lysophosphatidic acid (LPA). This enzyme utilizes acyl-phosphate as fatty acyl donor, but not acyl-CoA or acyl-ACP. This Cupriavidus metallidurans (strain ATCC 43123 / DSM 2839 / NBRC 102507 / CH34) (Ralstonia metallidurans) protein is Glycerol-3-phosphate acyltransferase.